The following is a 293-amino-acid chain: Aspartate carbamoyltransferase catalytic subunit (293 aa).

Residues Arg-50 and Thr-51 each coordinate carbamoyl phosphate. Lys-78 is an L-aspartate binding site. Positions 100, 127, and 130 each coordinate carbamoyl phosphate. L-aspartate is bound by residues Arg-160 and Arg-210. Carbamoyl phosphate is bound by residues Ala-253 and Pro-254.

This sequence belongs to the aspartate/ornithine carbamoyltransferase superfamily. ATCase family. As to quaternary structure, heterododecamer (2C3:3R2) of six catalytic PyrB chains organized as two trimers (C3), and six regulatory PyrI chains organized as three dimers (R2).

It catalyses the reaction carbamoyl phosphate + L-aspartate = N-carbamoyl-L-aspartate + phosphate + H(+). Its pathway is pyrimidine metabolism; UMP biosynthesis via de novo pathway; (S)-dihydroorotate from bicarbonate: step 2/3. Catalyzes the condensation of carbamoyl phosphate and aspartate to form carbamoyl aspartate and inorganic phosphate, the committed step in the de novo pyrimidine nucleotide biosynthesis pathway. The polypeptide is Aspartate carbamoyltransferase catalytic subunit (Staphylococcus epidermidis (strain ATCC 12228 / FDA PCI 1200)).